The sequence spans 505 residues: MVSIRPDEISSIIRQQIEQYSQDVKVENVGTVLQVGDGIARIYGLQQVMSGELVEFEDGTTGIALNLEEDNVGAVLMGEGRNIQEGSTVKATGKIAQIPVGDALVGRVVSPLGAPLDGKGEIAATENRLIESPAPGIIARRSVHEPMQTGITAIDAMIPIGRGQRELIIGDRQTGKTAIAIDTILNQKGEDVICVYVAIGQKASSVANIIEVLRERGALDYTVVVAANASEPATLQYLAPYAGAAIAEYFMCKGKATLVIYDDLTKQAQAYRQMSLLLRRPPGREAYPGDVFYLHSRLLERAAKLSDALGGGSMTALPVIETQAGDVSAYIPTNVISITDGQIFLSSDLFNSGLRPAINVGISVSRVGSAAQTKAIKKIAGTLKLELAQFDELAAFAQFASDLDKATQNQLARGQRLRELLKQPQFSPLILAEQVAVVYAGVKGLIDEIPVNQVTAFVSELRSYLKTSKPEFIEKVQSSKQLDDAAEALLKEAIAEVKKNILAAV.

Residue 170-177 (GDRQTGKT) coordinates ATP.

Belongs to the ATPase alpha/beta chains family. In terms of assembly, F-type ATPases have 2 components, CF(1) - the catalytic core - and CF(0) - the membrane proton channel. CF(1) has five subunits: alpha(3), beta(3), gamma(1), delta(1), epsilon(1). CF(0) has four main subunits: a(1), b(1), b'(1) and c(9-12).

It localises to the cellular thylakoid membrane. It catalyses the reaction ATP + H2O + 4 H(+)(in) = ADP + phosphate + 5 H(+)(out). In terms of biological role, produces ATP from ADP in the presence of a proton gradient across the membrane. The alpha chain is a regulatory subunit. This is ATP synthase subunit alpha from Synechococcus elongatus (strain ATCC 33912 / PCC 7942 / FACHB-805) (Anacystis nidulans R2).